Here is a 601-residue protein sequence, read N- to C-terminus: Sodium-dependent phosphate transport protein 2C (601 aa).

Residues 1–75 (MPNSLAGGQV…RRVVSSFLKA (75 aa)) lie on the Cytoplasmic side of the membrane. Ser4 is subject to Phosphoserine. A helical membrane pass occupies residues 76–96 (CGLLGSLYFFICSLDILSSAF). At 97–110 (QLLGSKMAGDIFKD) the chain is on the extracellular side. The helical transmembrane segment at 111-131 (NVVLSNPVAGLVIGVLVTVLV) threads the bilayer. Residues 132-187 (QSSSTSSSIVVSMVASKLLTVQVSVPIIMGVNVGTSITSTLVSMAQSGDRDEFQRA) are Cytoplasmic-facing. Residues 188–208 (FSGSAVHGIFNWLTVLVLLPL) form a helical membrane-spanning segment. Residues 209-324 (ESATAALERL…FAGSKLTDLA (116 aa)) are Extracellular-facing. N-linked (GlcNAc...) asparagine glycosylation is found at Asn264, Asn267, and Asn299. A disulfide bond links Cys275 and Cys311. The chain crosses the membrane as a helical span at residues 325–345 (VGFILLAGSLLVLCVCLVLIV). Over 346 to 369 (KLLNSVLKGRIAQAVKTVINADFP) the chain is Cytoplasmic. Residues 370-390 (FPFGWLSGYLAILVGAGLTFL) traverse the membrane as a helical segment. Topologically, residues 391-441 (LQSSSVFTAAIVPLMGVGVIDLERAYPLFLGSNIGTTTTALLAALASPADM) are extracellular. Residues 442–462 (LIFAVQVALIHFFFNLAGILL) form a helical membrane-spanning segment. Residues 463–487 (WYLVPVLRLPIPLAKRFGNLTAQYR) lie on the Cytoplasmic side of the membrane. A helical transmembrane segment spans residues 488 to 508 (WVAIVYLLLTFLLLPLAAFGL). Residues 509 to 512 (SLAG) lie on the Extracellular side of the membrane. A helical membrane pass occupies residues 513 to 533 (GTVLAAVGGPLVGLVLLIILV). Over 534-601 (NVLQQHRPSW…NPQVIASQQL (68 aa)) the chain is Cytoplasmic.

This sequence belongs to the SLC34A transporter family. In terms of tissue distribution, expressed only in the kidney.

The protein localises to the apical cell membrane. The catalysed reaction is 2 Na(+)(out) + phosphate(out) = 2 Na(+)(in) + phosphate(in). Its function is as follows. Involved in actively transporting phosphate into cells via Na(+) cotransport in the renal brush border membrane. The cotransport has a Na(+):Pi stoichiometry of 2:1 and is electroneutral. This Mus musculus (Mouse) protein is Sodium-dependent phosphate transport protein 2C (Slc34a3).